The chain runs to 314 residues: MSVAIIGAGAFGTALAVSLATKGPVTLWGRDTEWADTGENPRLPGVPLPPALRVTDRLDEITAETVLLALPAQVLGGFLAEHGAQFDRRNLVSCAKGIDLATLTGPSALIAAACPQATVAVLTGPSFAADIARGLPTALTLACADAGAAEALQRQLSTATLRLYRTTDVTGAELGGALKNIIAIAAGAAIGAGYGDSARASVVTRGFAEMLRLATALGARPETLPGLSGLGDLVLTCTSEQSRNFRYGLALGSRRPFAAGTTVEGASTARAVTQLAERLGIEMPISNLVAGLAEGRIAMEHALDFLLNRPLKEE.

NADPH is bound by residues Phe11, Arg30, and Lys96. Lys96, Gly124, and Ser126 together coordinate sn-glycerol 3-phosphate. NADPH is bound at residue Ala128. Sn-glycerol 3-phosphate contacts are provided by Lys179, Asp232, Ser242, Arg243, and Asn244. Lys179 functions as the Proton acceptor in the catalytic mechanism. Position 243 (Arg243) interacts with NADPH. Glu264 contributes to the NADPH binding site.

Belongs to the NAD-dependent glycerol-3-phosphate dehydrogenase family.

It is found in the cytoplasm. It catalyses the reaction sn-glycerol 3-phosphate + NAD(+) = dihydroxyacetone phosphate + NADH + H(+). It carries out the reaction sn-glycerol 3-phosphate + NADP(+) = dihydroxyacetone phosphate + NADPH + H(+). The protein operates within membrane lipid metabolism; glycerophospholipid metabolism. Catalyzes the reduction of the glycolytic intermediate dihydroxyacetone phosphate (DHAP) to sn-glycerol 3-phosphate (G3P), the key precursor for phospholipid synthesis. The sequence is that of Glycerol-3-phosphate dehydrogenase [NAD(P)+] from Paracoccus denitrificans (strain Pd 1222).